The primary structure comprises 355 residues: Cobalt-precorrin-5B C(1)-methyltransferase (355 aa).

This sequence belongs to the CbiD family.

It carries out the reaction Co-precorrin-5B + S-adenosyl-L-methionine = Co-precorrin-6A + S-adenosyl-L-homocysteine. It participates in cofactor biosynthesis; adenosylcobalamin biosynthesis; cob(II)yrinate a,c-diamide from sirohydrochlorin (anaerobic route): step 6/10. Functionally, catalyzes the methylation of C-1 in cobalt-precorrin-5B to form cobalt-precorrin-6A. The polypeptide is Cobalt-precorrin-5B C(1)-methyltransferase (Parasynechococcus marenigrum (strain WH8102)).